The following is a 527-amino-acid chain: L-amino-acid oxidase (527 aa).

The signal sequence occupies residues 1 to 27; that stretch reads MDLHRAPWKSSAAAAVLLLALFSGAAA. A disulfide bridge links C37 with C200. An N-linked (GlcNAc...) asparagine glycan is attached at N58. Residues 70-71, 90-91, R98, 114-117, and V288 each bind FAD; these read VA, EA, and GAMR. R117 contributes to the substrate binding site. N-linked (GlcNAc...) asparagine glycosylation is present at N393. Y403 serves as a coordination point for substrate. FAD contacts are provided by residues E485 and 492–497; that span reads AWMESA. 492 to 493 is a binding site for substrate; it reads AW.

In terms of assembly, homodimer. Requires FAD as cofactor. As to expression, expression mainly observed in plasma, spleen, kidney and gills with low levels detected in blood and no expression detected in brain, liver, heart, muscle or intestine (at protein level).

The protein localises to the secreted. The catalysed reaction is an L-alpha-amino acid + O2 + H2O = a 2-oxocarboxylate + H2O2 + NH4(+). In terms of biological role, inhibits the growth of both Gram-negative and Gram-positive bacteria. Displays strong antibacterial activity towards V.cholerae and E.tarda. Causes deformation of the surface of S.aureus and the formation of pores on the surface of E.coli. Strong antiparasitic activity is seen towards C.irritans, T.brucei and I.multifiliis. Cilia of treated theronts are lost and the macronucleus swells, inducing cell membrane rupture and efflux of the cytoplasm. This Siganus canaliculatus (White-spotted spinefoot) protein is L-amino-acid oxidase.